A 949-amino-acid chain; its full sequence is L-fucokinase/L-fucose-1-P guanylyltransferase (949 aa).

The segment at Asp25–Ala191 is fucose-1-phosphate guanylyltransferase. An L-fucokinase region spans residues Leu559–Ser949.

Belongs to the GHMP kinase family. In terms of assembly, homotetramer. Mn(2+) serves as cofactor. Mg(2+) is required as a cofactor.

The enzyme catalyses L-fucose + ATP = beta-L-fucose 1-phosphate + ADP + H(+). It carries out the reaction beta-L-fucose 1-phosphate + GTP + H(+) = GDP-beta-L-fucose + diphosphate. Functionally, bifunctional enzyme involved in the salvage pathway of GDP-fucose synthesis. Catalyzes two successive reactions, the ATP-dependent phosphorylation of L-fucose to L-fucose 1-phosphate, and its guanylylation to GDP-L-fucose. GDP-fucose is an important fucose donor in the process of fucosylated oligosaccharides formation. In Bacteroides fragilis, this protein is L-fucokinase/L-fucose-1-P guanylyltransferase.